A 232-amino-acid chain; its full sequence is Imidazole glycerol phosphate synthase subunit HisF (232 aa).

Catalysis depends on residues aspartate 11 and aspartate 130.

It belongs to the HisA/HisF family. In terms of assembly, heterodimer of HisH and HisF.

It is found in the cytoplasm. The catalysed reaction is 5-[(5-phospho-1-deoxy-D-ribulos-1-ylimino)methylamino]-1-(5-phospho-beta-D-ribosyl)imidazole-4-carboxamide + L-glutamine = D-erythro-1-(imidazol-4-yl)glycerol 3-phosphate + 5-amino-1-(5-phospho-beta-D-ribosyl)imidazole-4-carboxamide + L-glutamate + H(+). Its pathway is amino-acid biosynthesis; L-histidine biosynthesis; L-histidine from 5-phospho-alpha-D-ribose 1-diphosphate: step 5/9. IGPS catalyzes the conversion of PRFAR and glutamine to IGP, AICAR and glutamate. The HisF subunit catalyzes the cyclization activity that produces IGP and AICAR from PRFAR using the ammonia provided by the HisH subunit. This chain is Imidazole glycerol phosphate synthase subunit HisF, found in Listeria monocytogenes serotype 4a (strain HCC23).